An 84-amino-acid chain; its full sequence is Large ribosomal subunit protein bL31B (84 aa).

It belongs to the bacterial ribosomal protein bL31 family. Type B subfamily. In terms of assembly, part of the 50S ribosomal subunit.

In Staphylococcus aureus (strain Mu3 / ATCC 700698), this protein is Large ribosomal subunit protein bL31B.